A 493-amino-acid polypeptide reads, in one-letter code: Endothelial lipase (493 aa).

A signal peptide spans 1–23; that stretch reads MRDPVFLLGFWSLYCCFPAGSLT. Residues C66 and C79 are joined by a disulfide bond. 2 N-linked (GlcNAc...) asparagine glycosylation sites follow: N67 and N82. The active-site Nucleophile is S171. D195 functions as the Charge relay system in the catalytic mechanism. C254 and C274 are disulfide-bonded. H276 (charge relay system) is an active-site residue. Intrachain disulfides connect C299–C318 and C310–C313. 327–339 contacts heparin; the sequence is KMRKKRNSKMYLK. One can recognise a PLAT domain in the interval 349–484; sequence YHYQLKVHMF…SPGQELWFYK (136 aa). An N-linked (GlcNAc...) asparagine glycan is attached at N395. C465 and C485 form a disulfide bridge.

This sequence belongs to the AB hydrolase superfamily. Lipase family. In terms of assembly, head to tail Homodimer. Interacts with apolipoprotein C-2.

It localises to the secreted. It catalyses the reaction a triacylglycerol + H2O = a diacylglycerol + a fatty acid + H(+). It carries out the reaction a 1,2-diacyl-sn-glycero-3-phosphocholine + H2O = a 2-acyl-sn-glycero-3-phosphocholine + a fatty acid + H(+). The catalysed reaction is 1,2,3-tri-(9Z-octadecenoyl)-glycerol + H2O = di-(9Z)-octadecenoylglycerol + (9Z)-octadecenoate + H(+). The enzyme catalyses 1,2,3-tributanoylglycerol + H2O = dibutanoylglycerol + butanoate + H(+). It catalyses the reaction 1,2-dihexadecanoyl-sn-glycero-3-phosphocholine + H2O = hexadecanoyl-sn-glycero-3-phosphocholine + hexadecanoate + H(+). Its function is as follows. Exerts both phospholipase and triglyceride lipase activities. More active as a phospholipase than a triglyceride lipase. Hydrolyzes triglycerides, both with short-chain fatty acyl groups (tributyrin) and long-chain fatty acyl groups (triolein) with similar levels of activity toward both types of substrates. Hydrolyzes high density lipoproteins (HDL) more efficiently than other lipoproteins. The sequence is that of Endothelial lipase (Lipg) from Rattus norvegicus (Rat).